The sequence spans 121 residues: Ribonuclease P protein component (121 aa).

It belongs to the RnpA family. As to quaternary structure, consists of a catalytic RNA component (M1 or rnpB) and a protein subunit.

It catalyses the reaction Endonucleolytic cleavage of RNA, removing 5'-extranucleotides from tRNA precursor.. RNaseP catalyzes the removal of the 5'-leader sequence from pre-tRNA to produce the mature 5'-terminus. It can also cleave other RNA substrates such as 4.5S RNA. The protein component plays an auxiliary but essential role in vivo by binding to the 5'-leader sequence and broadening the substrate specificity of the ribozyme. The polypeptide is Ribonuclease P protein component (Geobacillus thermodenitrificans (strain NG80-2)).